The following is a 150-amino-acid chain: Large ribosomal subunit protein bL9 (150 aa).

This sequence belongs to the bacterial ribosomal protein bL9 family.

In terms of biological role, binds to the 23S rRNA. This chain is Large ribosomal subunit protein bL9, found in Paracidovorax citrulli (strain AAC00-1) (Acidovorax citrulli).